A 458-amino-acid chain; its full sequence is Bifunctional protein GlmU (458 aa).

Residues 1–230 (MLQVDVVILA…DWEVSGVNDK (230 aa)) are pyrophosphorylase. Residues 9-12 (LAAG), Lys-23, Gln-75, and 80-81 (GT) each bind UDP-N-acetyl-alpha-D-glucosamine. Residue Asp-104 participates in Mg(2+) binding. Gly-139, Glu-155, Asn-170, and Asn-228 together coordinate UDP-N-acetyl-alpha-D-glucosamine. Asn-228 is a Mg(2+) binding site. Positions 231–251 (IQLSILERAHQQDTANRLMEQ) are linker. An N-acetyltransferase region spans residues 252–458 (GVMFADPARF…NWKRPRKDRN (207 aa)). The UDP-N-acetyl-alpha-D-glucosamine site is built by Arg-334 and Lys-352. The active-site Proton acceptor is His-364. UDP-N-acetyl-alpha-D-glucosamine contacts are provided by Tyr-367 and Asn-378. Residues Ala-381, 387-388 (NY), Ser-406, Ala-424, and Arg-441 contribute to the acetyl-CoA site.

This sequence in the N-terminal section; belongs to the N-acetylglucosamine-1-phosphate uridyltransferase family. In the C-terminal section; belongs to the transferase hexapeptide repeat family. Homotrimer. The cofactor is Mg(2+).

The protein resides in the cytoplasm. It carries out the reaction alpha-D-glucosamine 1-phosphate + acetyl-CoA = N-acetyl-alpha-D-glucosamine 1-phosphate + CoA + H(+). The catalysed reaction is N-acetyl-alpha-D-glucosamine 1-phosphate + UTP + H(+) = UDP-N-acetyl-alpha-D-glucosamine + diphosphate. It functions in the pathway nucleotide-sugar biosynthesis; UDP-N-acetyl-alpha-D-glucosamine biosynthesis; N-acetyl-alpha-D-glucosamine 1-phosphate from alpha-D-glucosamine 6-phosphate (route II): step 2/2. Its pathway is nucleotide-sugar biosynthesis; UDP-N-acetyl-alpha-D-glucosamine biosynthesis; UDP-N-acetyl-alpha-D-glucosamine from N-acetyl-alpha-D-glucosamine 1-phosphate: step 1/1. It participates in bacterial outer membrane biogenesis; LPS lipid A biosynthesis. Catalyzes the last two sequential reactions in the de novo biosynthetic pathway for UDP-N-acetylglucosamine (UDP-GlcNAc). The C-terminal domain catalyzes the transfer of acetyl group from acetyl coenzyme A to glucosamine-1-phosphate (GlcN-1-P) to produce N-acetylglucosamine-1-phosphate (GlcNAc-1-P), which is converted into UDP-GlcNAc by the transfer of uridine 5-monophosphate (from uridine 5-triphosphate), a reaction catalyzed by the N-terminal domain. In Nitrosomonas europaea (strain ATCC 19718 / CIP 103999 / KCTC 2705 / NBRC 14298), this protein is Bifunctional protein GlmU.